The following is a 191-amino-acid chain: Large ribosomal subunit protein bL12cz (191 aa).

The transit peptide at 1-58 (MASTTLSIATTIRSSSYPTLASINHFPSRTTTIEFPSRFGGGSSSTLTHRATHLRPIA) directs the protein to the chloroplast.

It belongs to the bacterial ribosomal protein bL12 family.

It localises to the plastid. Its subcellular location is the chloroplast. In Arabidopsis thaliana (Mouse-ear cress), this protein is Large ribosomal subunit protein bL12cz (RPL12A).